The following is a 311-amino-acid chain: MADTLNVGVNLEAFSQAIHCIQALRSSVTRVFDCLKDGMKNKESQEVRERAFVSEFQDNLHCVNRDLNELERLSNLVGKPSENHPLHNSGLLSLDPVHDKTPLYSQLLQAYKWSNKLQFHAGLASGLLNQQSLKRSANQMGVSAKRRPKVQPTTLALPPQYIDDVISRIDRMFPEMTIQLSRPNGSSAMLLVTLGKVLKVVVVMRSLFIDRTIVKGYNENVYTEDGKLDIWSKSNYQVFQKVTDHATTALLHYQLPQMPDVVVRSFMTWLRSYIKLFQAPCQRCGKFLQDGLPPTWRDFRTLEAFHDSCRQ.

This sequence belongs to the Mediator complex subunit 27 family. As to quaternary structure, component of the Mediator complex.

Its subcellular location is the nucleus. In terms of biological role, component of the Mediator complex, a coactivator involved in the regulated transcription of nearly all RNA polymerase II-dependent genes. Mediator functions as a bridge to convey information from gene-specific regulatory proteins to the basal RNA polymerase II transcription machinery. Mediator is recruited to promoters by direct interactions with regulatory proteins and serves as a scaffold for the assembly of a functional preinitiation complex with RNA polymerase II and the general transcription factors. This Xenopus laevis (African clawed frog) protein is Mediator of RNA polymerase II transcription subunit 27-A (med27-a).